The chain runs to 142 residues: Deoxyuridine 5'-triphosphate nucleotidohydrolase (142 aa).

Substrate contacts are provided by residues 62–64, asparagine 75, and 79–81; these read RSG and TID.

Belongs to the dUTPase family. Mg(2+) is required as a cofactor.

The enzyme catalyses dUTP + H2O = dUMP + diphosphate + H(+). The protein operates within pyrimidine metabolism; dUMP biosynthesis; dUMP from dCTP (dUTP route): step 2/2. Its function is as follows. This enzyme is involved in nucleotide metabolism: it produces dUMP, the immediate precursor of thymidine nucleotides and it decreases the intracellular concentration of dUTP so that uracil cannot be incorporated into DNA. This Crocosphaera subtropica (strain ATCC 51142 / BH68) (Cyanothece sp. (strain ATCC 51142)) protein is Deoxyuridine 5'-triphosphate nucleotidohydrolase.